A 506-amino-acid polypeptide reads, in one-letter code: RNA-splicing ligase RtcB homolog (506 aa).

Mn(2+) contacts are provided by D120, C123, H228, H260, and H354. 227–231 contacts GMP; that stretch reads NHYAE. Residues 354 to 355, 403 to 406, S410, 429 to 432, and K505 contribute to the GMP site; these read HN, GGSM, and HGAG. The active-site GMP-histidine intermediate is H429.

It belongs to the RtcB family. In terms of assembly, catalytic component of the tRNA-splicing ligase complex. Requires Mn(2+) as cofactor.

The enzyme catalyses a 3'-end 3'-phospho-ribonucleotide-RNA + a 5'-end dephospho-ribonucleoside-RNA + GTP = a ribonucleotidyl-ribonucleotide-RNA + GMP + diphosphate. The catalysed reaction is a 3'-end 2',3'-cyclophospho-ribonucleotide-RNA + a 5'-end dephospho-ribonucleoside-RNA + GTP + H2O = a ribonucleotidyl-ribonucleotide-RNA + GMP + diphosphate + H(+). Functionally, catalytic subunit of the tRNA-splicing ligase complex that acts by directly joining spliced tRNA halves to mature-sized tRNAs by incorporating the precursor-derived splice junction phosphate into the mature tRNA as a canonical 3',5'-phosphodiester. May act as an RNA ligase with broad substrate specificity, and may function toward other RNAs. The protein is RNA-splicing ligase RtcB homolog of Anopheles gambiae (African malaria mosquito).